Here is a 130-residue protein sequence, read N- to C-terminus: Protein ApaG (130 aa).

Residues 3-127 (EHESCGVRIS…FSLDRPSDRL (125 aa)) form the ApaG domain.

The polypeptide is Protein ApaG (Maricaulis maris (strain MCS10) (Caulobacter maris)).